The primary structure comprises 316 residues: Transaldolase (316 aa).

K131 (schiff-base intermediate with substrate) is an active-site residue.

Belongs to the transaldolase family. Type 1 subfamily. In terms of assembly, homodimer.

It is found in the cytoplasm. The catalysed reaction is D-sedoheptulose 7-phosphate + D-glyceraldehyde 3-phosphate = D-erythrose 4-phosphate + beta-D-fructose 6-phosphate. Its pathway is carbohydrate degradation; pentose phosphate pathway; D-glyceraldehyde 3-phosphate and beta-D-fructose 6-phosphate from D-ribose 5-phosphate and D-xylulose 5-phosphate (non-oxidative stage): step 2/3. Transaldolase is important for the balance of metabolites in the pentose-phosphate pathway. In Buchnera aphidicola subsp. Baizongia pistaciae (strain Bp), this protein is Transaldolase.